The following is a 194-amino-acid chain: MQLFIEYFPLLIFFIINSIAGIYWATGSLIVAAFVQIFYYKIKKEKIPAKQWIIFGLIVVFGGLTIYLQNDAFLKWKVTIINAFFAAALLVSNTFFNKNIIKEFLAESLSLPENIWSRLNLAWALFFLFCSGLNYYIAFNYDLDTWVNFKVFGLTGLMFLFSITSILFLYKYLEVEEEINDTDTINNEKTKEST.

Helical transmembrane passes span 3–23 (LFIE…AGIY), 47–67 (IPAK…LTIY), 76–96 (WKVT…NTFF), 119–139 (LNLA…YIAF), and 149–169 (FKVF…ILFL).

The protein belongs to the YciB family.

It localises to the cell inner membrane. Functionally, plays a role in cell envelope biogenesis, maintenance of cell envelope integrity and membrane homeostasis. In Colwellia psychrerythraea (strain 34H / ATCC BAA-681) (Vibrio psychroerythus), this protein is Inner membrane-spanning protein YciB.